The following is an 89-amino-acid chain: Small ribosomal subunit protein uS15 (89 aa).

This sequence belongs to the universal ribosomal protein uS15 family. As to quaternary structure, part of the 30S ribosomal subunit. Forms a bridge to the 50S subunit in the 70S ribosome, contacting the 23S rRNA.

Functionally, one of the primary rRNA binding proteins, it binds directly to 16S rRNA where it helps nucleate assembly of the platform of the 30S subunit by binding and bridging several RNA helices of the 16S rRNA. Its function is as follows. Forms an intersubunit bridge (bridge B4) with the 23S rRNA of the 50S subunit in the ribosome. This chain is Small ribosomal subunit protein uS15, found in Lactococcus lactis subsp. lactis (strain IL1403) (Streptococcus lactis).